Reading from the N-terminus, the 78-residue chain is MKLTCMMIVAVLFLTAWIFITADNSRNGIENLPRMRRHEMKNPKASKLNKRGCREGGEFCGTLYEERCCSGWCFFVCV.

Residues 1–22 form the signal peptide; it reads MKLTCMMIVAVLFLTAWIFITA. A propeptide spanning residues 23-51 is cleaved from the precursor; that stretch reads DNSRNGIENLPRMRRHEMKNPKASKLNKR. Cystine bridges form between Cys53/Cys69, Cys60/Cys73, and Cys68/Cys77.

Belongs to the conotoxin O1 superfamily. As to expression, expressed by the venom duct.

The protein localises to the secreted. The protein is Conotoxin 6 of Conus imperialis (Imperial cone).